The primary structure comprises 317 residues: Ferrochelatase (317 aa).

2 residues coordinate Fe cation: His192 and Glu271.

It belongs to the ferrochelatase family.

It localises to the cytoplasm. It carries out the reaction heme b + 2 H(+) = protoporphyrin IX + Fe(2+). It functions in the pathway porphyrin-containing compound metabolism; protoheme biosynthesis; protoheme from protoporphyrin-IX: step 1/1. Catalyzes the ferrous insertion into protoporphyrin IX. This Geobacter sp. (strain M21) protein is Ferrochelatase.